A 468-amino-acid polypeptide reads, in one-letter code: Sorting and assembly machinery component 50 homolog B (468 aa).

The disordered stretch occupies residues 1–25 (MGTVHARSLDPLPMNGPDFGSPDDA). One can recognise a POTRA domain in the interval 44 to 124 (VVVQRVHFEG…LDVTFEVTEL (81 aa)).

It belongs to the SAM50/omp85 family. As to quaternary structure, associates with the mitochondrial contact site and cristae organizing system (MICOS) complex (also known as MINOS or MitOS complex).

The protein localises to the mitochondrion outer membrane. Its function is as follows. May play a role in the maintenance of the structure of mitochondrial cristae. This is Sorting and assembly machinery component 50 homolog B (samm50-b) from Xenopus laevis (African clawed frog).